The primary structure comprises 696 residues: MLVDDKITVIVPVYNVENYLRKCLDSIITQTYKNIEIVVVNDGSTDASGEICKEFSEMDHRILYIEQENAGLSAARNTGLNNMSGNYVTFVDSDDWIEQDYVETLYKKIVEYQADIAVGNYYSFNESEGMFYFHILGDSYYEKVYDNVSIFENLYETQEMKSFALISAWGKLYKARLFEQLRFDIGKLGEDGYLNQKVYLLSEKVIYLNKSLYAYRIRKGSLSRVWTEKWMHALVDAMSERITLLANMGYPLEKHLAVYRQMLEVSLANGQASGLSDTATYKEFEMKQRLLNQLSRQEESEKKAIVLAANYGYVDQVLTTIKSICYHNRSIRFYLIHSDFPNEWIKQLNKRLEKFDSEIINCRVTSEQISCYKSDISYTVFLRYFIADFVQEDKALYLDCDLVVTKNLDDLFATDLQDYPLAAVRDFGGRAYFGQEIFNAGVLLVNNAFWKKENMTQKLIDVTNEWHDKVDQADQSILNMLFEHKWLELDFDYNHIVIHKQFADYQLPEGQDYPAIIHYLSHRKPWKDLAAQTYREVWWYYHGLEWTELGQNHHLHPLQRSHIYPIKEPFTCLIYTASDHIEQIETLVQSLPDIQFKIAARVIVSDRLAQMTIYPNVTIFNGIHYLVDVDNELVETSQVLLDINHGEKTEEILDQFANLGKPILSFENTKTYEVGQEAYAVDQVQAMIEKLREISK.

The GT2 domain stretch occupies residues 1-301 (MLVDDKITVI…NQLSRQEESE (301 aa)). Residues 302–556 (KKAIVLAANY…TELGQNHHLH (255 aa)) form a GT8 domain region. UDP is bound by residues 308 to 313 (AANYGY) and 399 to 400 (DC). Residues D399, D401, and H518 each coordinate Mn(2+). Position 518-524 (518-524 (HYLSHRK)) interacts with UDP.

In the N-terminal section; belongs to the glycosyltransferase 2 family. The protein in the central section; belongs to the glycosyltransferase 8 family.

It functions in the pathway protein modification; protein glycosylation. In terms of biological role, involved in the polymorphic O-glycosylation of the serine-rich repeat protein PsrP. Catalyzes the fourth step in glycosylation of PsrP in this bacteria. Can transfer the sugar from UDP-galactose to the terminal sugar moiety of PsrP-GlcNAc-Glc-Gal or of PsrP-GlcNAc-Glc-Glc (using truncated substrates with the PsrP SSR1 domain). Has hydrolytic activity against UDP-galactose and to a lesser extent against UDP-glucose. This Streptococcus pneumoniae serotype 4 (strain ATCC BAA-334 / TIGR4) protein is Glycosyltransferase GlyA.